We begin with the raw amino-acid sequence, 275 residues long: Large ribosomal subunit protein uL2 (275 aa).

The segment at 223–275 (VAMNPVDHPHGGGEGRTGEGRVPVSPWGTPAKGYRTRNNKRTDNMIVRRRHSK) is disordered. Residues 229-241 (DHPHGGGEGRTGE) show a composition bias toward basic and acidic residues.

This sequence belongs to the universal ribosomal protein uL2 family. In terms of assembly, part of the 50S ribosomal subunit. Forms a bridge to the 30S subunit in the 70S ribosome.

One of the primary rRNA binding proteins. Required for association of the 30S and 50S subunits to form the 70S ribosome, for tRNA binding and peptide bond formation. It has been suggested to have peptidyltransferase activity; this is somewhat controversial. Makes several contacts with the 16S rRNA in the 70S ribosome. The protein is Large ribosomal subunit protein uL2 of Laribacter hongkongensis (strain HLHK9).